A 469-amino-acid polypeptide reads, in one-letter code: Citrate synthase, mitochondrial (469 aa).

Residues 1–30 (MSFLTVSRLAPKLLNSKNATYFLVAARNAS) constitute a mitochondrion transit peptide. Catalysis depends on residues His304 and His350. Arg359 contacts oxaloacetate. Asp405 is a catalytic residue. Arg431 and Arg451 together coordinate oxaloacetate.

Belongs to the citrate synthase family. In terms of assembly, homodimer.

It localises to the mitochondrion matrix. It carries out the reaction oxaloacetate + acetyl-CoA + H2O = citrate + CoA + H(+). It participates in carbohydrate metabolism; tricarboxylic acid cycle; isocitrate from oxaloacetate: step 1/2. Its function is as follows. Key enzyme of the Krebs tricarboxylic acid cycle which catalyzes the synthesis of citrate from acetyl coenzyme A and oxaloacetate. The protein is Citrate synthase, mitochondrial (cs) of Kajikia audax (Striped marlin).